The chain runs to 314 residues: DegV domain-containing protein XCC3382 (314 aa).

Positions 3–307 (IGIVVDSACD…KGALAVAFAA (305 aa)) constitute a DegV domain. Residues threonine 63 and serine 96 each contribute to the hexadecanoate site.

In terms of biological role, may bind long-chain fatty acids, such as palmitate, and may play a role in lipid transport or fatty acid metabolism. The sequence is that of DegV domain-containing protein XCC3382 from Xanthomonas campestris pv. campestris (strain ATCC 33913 / DSM 3586 / NCPPB 528 / LMG 568 / P 25).